A 601-amino-acid chain; its full sequence is Dual specificity tyrosine-phosphorylation-regulated kinase 2 (601 aa).

Residues 1–24 form a disordered region; it reads MLTRKPSAAAPAAYPTGRGGDSAV. Serine 30 carries the phosphoserine modification. Threonine 106 bears the Phosphothreonine; by ATM mark. A Nuclear localization signal motif is present at residues 189–191; it reads KKR. In terms of domain architecture, Protein kinase spans 222–535; sequence YEVLKVIGKG…PGQALRHPWL (314 aa). Residues 228-236, lysine 251, and 301-304 each bind ATP; these read IGKGSFGQV and FELL. Aspartate 348 acts as the Proton acceptor in catalysis. The residue at position 381 (threonine 381) is a Phosphothreonine; by MAP3K10. Tyrosine 382 bears the Phosphotyrosine; by autocatalysis mark. Residue serine 442 is modified to Phosphoserine; by ATM. Serine 449 carries the post-translational modification Phosphoserine; by MAP3K10.

This sequence belongs to the protein kinase superfamily. CMGC Ser/Thr protein kinase family. MNB/DYRK subfamily. In terms of assembly, component of an E3 ligase complex containing DYRK2, EDD/UBR5, DDB1 and DCAF1 (EDVP complex). Interacts directly with EDD/UBR5, DDB1 and DCAF1. Interacts with SIAH2 and MDM2. Interacts with MAP3K10 and NFATC1. May also interact with CCNL2. The cofactor is Mg(2+). Mn(2+) serves as cofactor. In terms of processing, autophosphorylates cotranslationally on the second tyrosine residue in the Tyr-X-Tyr motif in the activation loop, but once mature, does not have any protein tyrosine kinase activity. Phosphorylated at Thr-106 and Ser-442 by ATM in response to genotoxic stress. Under normal conditions, polyubiquitinated in the nucleus by MDM2, leading to its proteasomal degradation. Phosphorylation on Thr-106 and Ser-442 by ATM in response to genotoxic stress disrupts MDM2 binding and prevents MDM2-mediated ubiquitination and subsequent proteasomal degradation. Polyubiquitinated by SIAH2, leading to its proteasomal degradation. Polyubiquitinated by SIAH2 occurs under normal conditions, and is enhanced in response to hypoxia. As to expression, testis, after the onset of spermatogenesis.

The protein resides in the cytoplasm. It is found in the nucleus. It carries out the reaction L-seryl-[protein] + ATP = O-phospho-L-seryl-[protein] + ADP + H(+). The enzyme catalyses L-threonyl-[protein] + ATP = O-phospho-L-threonyl-[protein] + ADP + H(+). The catalysed reaction is L-tyrosyl-[protein] + ATP = O-phospho-L-tyrosyl-[protein] + ADP + H(+). Activated by autophosphorylation on the second tyrosine residue in the Tyr-X-Tyr motif in the activation loop. Inhibited by acridine analogs, purvalanol, and barely by harmine. Inhibited by leucettine and leucettine derivatives. In terms of biological role, serine/threonine-protein kinase involved in the regulation of the mitotic cell cycle, cell proliferation, apoptosis, organization of the cytoskeleton and neurite outgrowth. Functions in part via its role in ubiquitin-dependent proteasomal protein degradation. Functions downstream of ATM and phosphorylates p53/TP53 at 'Ser-46', and thereby contributes to the induction of apoptosis in response to DNA damage. Phosphorylates NFATC1, and thereby inhibits its accumulation in the nucleus and its transcription factor activity. Phosphorylates EIF2B5 at 'Ser-544', enabling its subsequent phosphorylation and inhibition by GSK3B. Likewise, phosphorylation of NFATC1, CRMP2/DPYSL2 and CRMP4/DPYSL3 promotes their subsequent phosphorylation by GSK3B. May play a general role in the priming of GSK3 substrates. Inactivates GYS1 by phosphorylation at 'Ser-641', and potentially also a second phosphorylation site, thus regulating glycogen synthesis. Mediates EDVP E3 ligase complex formation and is required for the phosphorylation and subsequent degradation of KATNA1. Phosphorylates TERT at 'Ser-457', promoting TERT ubiquitination by the EDVP complex. Phosphorylates SIAH2, and thereby increases its ubiquitin ligase activity. Promotes the proteasomal degradation of MYC and JUN, and thereby regulates progress through the mitotic cell cycle and cell proliferation. Promotes proteasomal degradation of GLI2 and GLI3, and thereby plays a role in smoothened and sonic hedgehog signaling. Plays a role in cytoskeleton organization and neurite outgrowth via its phosphorylation of DCX and DPYSL2. Phosphorylates CRMP2/DPYSL2, CRMP4/DPYSL3, DCX, EIF2B5, EIF4EBP1, GLI2, GLI3, GYS1, JUN, MDM2, MYC, NFATC1, p53/TP53, TAU/MAPT and KATNA1. Can phosphorylate histone H1, histone H3 and histone H2B (in vitro). Can phosphorylate CARHSP1 (in vitro). The sequence is that of Dual specificity tyrosine-phosphorylation-regulated kinase 2 (DYRK2) from Homo sapiens (Human).